The following is a 539-amino-acid chain: Chaperonin GroEL (539 aa).

Residues 29-32 (TLGP), 86-90 (DGTTT), Gly413, 477-479 (DAL), and Asp493 each bind ATP.

Belongs to the chaperonin (HSP60) family. Forms a cylinder of 14 subunits composed of two heptameric rings stacked back-to-back. Interacts with the co-chaperonin GroES.

The protein localises to the cytoplasm. The enzyme catalyses ATP + H2O + a folded polypeptide = ADP + phosphate + an unfolded polypeptide.. Its function is as follows. Together with its co-chaperonin GroES, plays an essential role in assisting protein folding. The GroEL-GroES system forms a nano-cage that allows encapsulation of the non-native substrate proteins and provides a physical environment optimized to promote and accelerate protein folding. The chain is Chaperonin GroEL from Clostridium perfringens (strain 13 / Type A).